We begin with the raw amino-acid sequence, 91 residues long: Defensin-like protein 220 (91 aa).

Residues 1 to 19 (MKTIFFFITFIVLVSSCTS) form the signal peptide. Disulfide bonds link C61/C78, C64/C83, and C68/C85.

This sequence belongs to the DEFL family.

The protein localises to the secreted. This is Defensin-like protein 220 from Arabidopsis thaliana (Mouse-ear cress).